The following is a 597-amino-acid chain: tRNA uridine 5-carboxymethylaminomethyl modification enzyme MnmG (597 aa).

Residue 11-16 (GAGHAG) participates in FAD binding. 275–289 (SPRYCPSIEEKIERY) is a binding site for NAD(+).

Belongs to the MnmG family. As to quaternary structure, homodimer. Heterotetramer of two MnmE and two MnmG subunits. The cofactor is FAD.

Its subcellular location is the cytoplasm. Its function is as follows. NAD-binding protein involved in the addition of a carboxymethylaminomethyl (cmnm) group at the wobble position (U34) of certain tRNAs, forming tRNA-cmnm(5)s(2)U34. The polypeptide is tRNA uridine 5-carboxymethylaminomethyl modification enzyme MnmG (Endomicrobium trichonymphae).